Reading from the N-terminus, the 180-residue chain is Stathmin-3 (180 aa).

S-palmitoyl cysteine attachment occurs at residues C22 and C24. Residues 38-180 (GDMEVKQLDK…NKEQREEMSG (143 aa)) enclose the SLD domain. S50, S60, S65, S68, S72, S73, and S81 each carry phosphoserine. Positions 59-82 (KSPSDLSPESPMLSSPPKKKDTSL) are disordered. Low complexity predominate over residues 60-74 (SPSDLSPESPMLSSP). The stretch at 75–179 (PKKKDTSLEE…RNKEQREEMS (105 aa)) forms a coiled coil.

Belongs to the stathmin family. In terms of assembly, interacts with STAT3. Interacts with CLU (secreted form); this interaction may act as an important modulator during neuronal differentiation. Post-translationally, N-terminal palmitoylation promotes specific anchoring to the cytosolic leaflet of Golgi membranes and subsequent vesicular trafficking along dendrites and axons. Neuronal Stathmins are substrates for palmitoyltransferases ZDHHC3, ZDHHC7 and ZDHHC15. As to expression, neuron specific.

Its subcellular location is the golgi apparatus. It localises to the cell projection. It is found in the growth cone. The protein localises to the axon. The protein resides in the cytoplasm. Its subcellular location is the cytosol. Its function is as follows. Exhibits microtubule-destabilizing activity, which is antagonized by STAT3. The sequence is that of Stathmin-3 (STMN3) from Homo sapiens (Human).